The sequence spans 331 residues: Nucleotide sugar transporter SLC35B4 (331 aa).

The next 11 helical transmembrane spans lie at 4–24 (AFAV…LELL), 30–50 (GCGN…GFLF), 59–79 (PAIP…VSVV), 92–112 (LHMI…IIIL), 124–144 (IALV…QVTV), 153–173 (GFQA…ALLM), 201–221 (ALPL…VVLF), 229–249 (VPVI…NVVT), 251–267 (YVCI…CTSL), 268–288 (TVTL…ILYF), and 294–314 (MWHW…TEVW). A Mediates endoplasmic reticulum retention motif is present at residues 326–331 (KDDKKD).

It belongs to the nucleotide-sugar transporter family. SLC35B subfamily.

The protein resides in the endoplasmic reticulum membrane. It carries out the reaction UDP-N-acetyl-alpha-D-glucosamine(in) + UDP-alpha-D-glucuronate(out) = UDP-N-acetyl-alpha-D-glucosamine(out) + UDP-alpha-D-glucuronate(in). The catalysed reaction is UDP-alpha-D-xylose(in) + UDP-alpha-D-glucuronate(out) = UDP-alpha-D-xylose(out) + UDP-alpha-D-glucuronate(in). Antiporter that transports nucleotide sugars across the endoplasmic reticulum (ER) membrane in exchange for another nucleotide sugar. May couple UDP-alpha-D-glucuronate (UDP-GlcA) or UDP-alpha-D-xylose (UDP-Xyl) efflux to UDP-alpha-D-glucuronate (UDP-GlcA) influx into the ER lumen, which in turn stimulates glucuronidation and excretion of endobiotics and xenobiotics. The sequence is that of Nucleotide sugar transporter SLC35B4 (Slc35b4) from Mus musculus (Mouse).